Consider the following 1530-residue polypeptide: Brefeldin A resistance protein (1530 aa).

The span at 1-26 (MNQNSDTTHGQALGSTLNHTTEVTRI) shows a compositional bias: polar residues. The tract at residues 1 to 100 (MNQNSDTTHG…SDDSSVDRLA (100 aa)) is disordered. N-linked (GlcNAc...) asparagine glycosylation is present at asparagine 28. Residues 36–48 (SSSNVDESLDSSN) show a composition bias toward low complexity. Residues 54–64 (KASHTNEEYRS) show a composition bias toward basic and acidic residues. Asparagine 67 carries N-linked (GlcNAc...) asparagine glycosylation. Positions 72-93 (PSSSNEPSPESSSNSDSSSSDD) are enriched in low complexity. The ABC transporter 1 domain occupies 153 to 410 (KTFPDIFLQP…FLDMGFDCHP (258 aa)). N-linked (GlcNAc...) asparagine glycans are attached at residues asparagine 273, asparagine 334, and asparagine 450. A phosphoserine mark is found at serine 486 and serine 489. Position 491 is a phosphothreonine (threonine 491). 6 helical membrane passes run 539–559 (AYIG…GSIF), 575–595 (VLFF…ANMF), 620–640 (LIVD…VLYF), 649–669 (GGFW…SAFF), 684–704 (ALGG…IPNI), and 791–811 (LAII…ASET). The segment at 843–864 (PLDLETGQDTQGGDVVKESPDN) is disordered. Residues 882–1125 (FSWRNLNYDI…LLNYFESHGA (244 aa)) form the ABC transporter 2 domain. ATP is bound at residue 918 to 925 (GESGAGKT). N-linked (GlcNAc...) asparagine glycosylation is found at asparagine 1159 and asparagine 1175. Phosphothreonine is present on threonine 1186. A run of 6 helical transmembrane segments spans residues 1220-1240 (ILMS…FTFY), 1255-1275 (AVFM…PKFI), 1300-1320 (AIIV…LCWF), 1338-1358 (YAWL…QAVA), 1367-1387 (ASVV…VLQP), and 1392-1412 (VGFW…EGLL). 2 N-linked (GlcNAc...) asparagine glycosylation sites follow: asparagine 1449 and asparagine 1460. The helical transmembrane segment at 1492-1512 (GIFVGYVFFNIFAVLLLFYVF) threads the bilayer.

It belongs to the ABC transporter superfamily. ABCG family. PDR (TC 3.A.1.205) subfamily.

It is found in the membrane. In terms of biological role, confers hyper-resistance to brefeldin A (BFA), an inhibitor of intracellular protein transport. Could serve as an efflux pump of various antibiotics. The sequence is that of Brefeldin A resistance protein (bfr1) from Schizosaccharomyces pombe (strain 972 / ATCC 24843) (Fission yeast).